We begin with the raw amino-acid sequence, 361 residues long: 3-isopropylmalate dehydrogenase (361 aa).

An NAD(+)-binding site is contributed by 78-91 (GTQWDSLPRHLRPE). Residues R98, R108, R136, and D226 each coordinate substrate. Mg(2+) is bound by residues D226, D250, and D254. Residue 284 to 296 (GSAPDIAGQDKAN) coordinates NAD(+).

It belongs to the isocitrate and isopropylmalate dehydrogenases family. LeuB type 1 subfamily. As to quaternary structure, homodimer. It depends on Mg(2+) as a cofactor. Mn(2+) serves as cofactor.

The protein localises to the cytoplasm. It catalyses the reaction (2R,3S)-3-isopropylmalate + NAD(+) = 4-methyl-2-oxopentanoate + CO2 + NADH. It functions in the pathway amino-acid biosynthesis; L-leucine biosynthesis; L-leucine from 3-methyl-2-oxobutanoate: step 3/4. Functionally, catalyzes the oxidation of 3-carboxy-2-hydroxy-4-methylpentanoate (3-isopropylmalate) to 3-carboxy-4-methyl-2-oxopentanoate. The product decarboxylates to 4-methyl-2 oxopentanoate. The chain is 3-isopropylmalate dehydrogenase from Thermosynechococcus vestitus (strain NIES-2133 / IAM M-273 / BP-1).